A 265-amino-acid chain; its full sequence is 3-methyl-2-oxobutanoate hydroxymethyltransferase (265 aa).

2 residues coordinate Mg(2+): Asp-41 and Asp-80. Residues 41 to 42 (DS), Asp-80, and Lys-109 each bind 3-methyl-2-oxobutanoate. Position 111 (Glu-111) interacts with Mg(2+). The Proton acceptor role is filled by Glu-178.

The protein belongs to the PanB family. In terms of assembly, homodecamer; pentamer of dimers. Mg(2+) is required as a cofactor.

Its subcellular location is the cytoplasm. The enzyme catalyses 3-methyl-2-oxobutanoate + (6R)-5,10-methylene-5,6,7,8-tetrahydrofolate + H2O = 2-dehydropantoate + (6S)-5,6,7,8-tetrahydrofolate. It participates in cofactor biosynthesis; (R)-pantothenate biosynthesis; (R)-pantoate from 3-methyl-2-oxobutanoate: step 1/2. Catalyzes the reversible reaction in which hydroxymethyl group from 5,10-methylenetetrahydrofolate is transferred onto alpha-ketoisovalerate to form ketopantoate. The polypeptide is 3-methyl-2-oxobutanoate hydroxymethyltransferase (Thermosipho africanus (strain TCF52B)).